The sequence spans 311 residues: uncharacterized protein (311 aa).

This is an uncharacterized protein from Mycoplasma genitalium (strain ATCC 33530 / DSM 19775 / NCTC 10195 / G37) (Mycoplasmoides genitalium).